Consider the following 204-residue polypeptide: DNA-directed RNA polymerase III subunit RPC8 (204 aa).

The tract at residues 158 to 178 (VDTSPTGPSSAEAASSSEELP) is disordered. Residues 166–175 (SSAEAASSSE) show a composition bias toward low complexity.

This sequence belongs to the eukaryotic RPB7/RPC8 RNA polymerase subunit family. Component of the RNA polymerase III complex consisting of 17 subunits: a ten-subunit horseshoe-shaped catalytic core composed of POLR3A/RPC1, POLR3B/RPC2, POLR1C/RPAC1, POLR1D/RPAC2, POLR3K/RPC10, POLR2E/RPABC1, POLR2F/RPABC2, POLR2H/RPABC3, POLR2K/RPABC4 and POLR2L/RPABC5; a mobile stalk composed of two subunits POLR3H/RPC8 and CRCP/RPC9, protruding from the core and functioning primarily in transcription initiation; and additional subunits homologous to general transcription factors of the RNA polymerase II machinery, POLR3C/RPC3-POLR3F/RPC6-POLR3G/RPC7 heterotrimer required for transcription initiation and POLR3D/RPC4-POLR3E/RPC5 heterodimer involved in both transcription initiation and termination. Interacts with CRCP/RPC9. POLR3H/RPC8 and CRCP/RPC9 probably form a Pol III subcomplex.

It is found in the nucleus. Its function is as follows. DNA-dependent RNA polymerase catalyzes the transcription of DNA into RNA using the four ribonucleoside triphosphates as substrates. Specific peripheric component of RNA polymerase III (Pol III) which synthesizes small non-coding RNAs including 5S rRNA, snRNAs, tRNAs and miRNAs from at least 500 distinct genomic loci. With CRCP/RPC9 forms a mobile stalk that protrudes from Pol III core and functions primarily in transcription initiation. Pol III plays a key role in sensing and limiting infection by intracellular bacteria and DNA viruses. Acts as nuclear and cytosolic DNA sensor involved in innate immune response. Can sense non-self dsDNA that serves as template for transcription into dsRNA. The non-self RNA polymerase III transcripts, such as Epstein-Barr virus-encoded RNAs (EBERs) induce type I interferon and NF-kappa-B through the RIG-I pathway. The protein is DNA-directed RNA polymerase III subunit RPC8 (POLR3H) of Bos taurus (Bovine).